We begin with the raw amino-acid sequence, 329 residues long: Cytosolic arginine sensor for mTORC1 subunit 2 (329 aa).

2 consecutive ACT domains span residues 72-140 (ADAT…HTLS) and 262-322 (ELWK…SALK).

It belongs to the GATS family. As to quaternary structure, forms homodimers and heterodimers with CASTOR1. Interacts with the GATOR2 complex which is composed of MIOS, SEC13, SEH1L, WDR24 and WDR59; the interaction is not regulated by arginine. In terms of tissue distribution, widely expressed.

It localises to the cytoplasm. It is found in the cytosol. Its function is as follows. Functions as a negative regulator of the TORC1 signaling pathway through the GATOR complex. As part of homodimers or heterodimers with CASTOR1, directly binds and inhibits the GATOR subcomplex GATOR2 and thereby mTORC1. Does not directly bind arginine, but binding of arginine to CASTOR1 disrupts the interaction of CASTOR2-containing heterodimers with GATOR2 which can in turn activate mTORC1 and the TORC1 signaling pathway. The polypeptide is Cytosolic arginine sensor for mTORC1 subunit 2 (Homo sapiens (Human)).